A 72-amino-acid polypeptide reads, in one-letter code: Large ribosomal subunit protein uL29 (72 aa).

Belongs to the universal ribosomal protein uL29 family.

The chain is Large ribosomal subunit protein uL29 from Prochlorococcus marinus (strain MIT 9312).